A 208-amino-acid polypeptide reads, in one-letter code: Small ribosomal subunit protein uS4 (208 aa).

Residues 95 to 157 form the S4 RNA-binding domain; the sequence is RRIDNVVYRA…DRLKKLVRSN (63 aa).

Belongs to the universal ribosomal protein uS4 family. As to quaternary structure, part of the 30S ribosomal subunit. Contacts protein S5. The interaction surface between S4 and S5 is involved in control of translational fidelity.

Its function is as follows. One of the primary rRNA binding proteins, it binds directly to 16S rRNA where it nucleates assembly of the body of the 30S subunit. In terms of biological role, with S5 and S12 plays an important role in translational accuracy. In Borrelia turicatae (strain 91E135), this protein is Small ribosomal subunit protein uS4.